Reading from the N-terminus, the 269-residue chain is Hydroxyethylthiazole kinase (269 aa).

M45 contributes to the substrate binding site. Residues R121 and T167 each coordinate ATP. G194 serves as a coordination point for substrate.

Belongs to the Thz kinase family. It depends on Mg(2+) as a cofactor.

It catalyses the reaction 5-(2-hydroxyethyl)-4-methylthiazole + ATP = 4-methyl-5-(2-phosphooxyethyl)-thiazole + ADP + H(+). It functions in the pathway cofactor biosynthesis; thiamine diphosphate biosynthesis; 4-methyl-5-(2-phosphoethyl)-thiazole from 5-(2-hydroxyethyl)-4-methylthiazole: step 1/1. Its function is as follows. Catalyzes the phosphorylation of the hydroxyl group of 4-methyl-5-beta-hydroxyethylthiazole (THZ). In Bacillus cereus (strain ATCC 14579 / DSM 31 / CCUG 7414 / JCM 2152 / NBRC 15305 / NCIMB 9373 / NCTC 2599 / NRRL B-3711), this protein is Hydroxyethylthiazole kinase.